A 342-amino-acid chain; its full sequence is DNA repair protein RAD51 homolog 1 (342 aa).

The disordered stretch occupies residues 1–24 (MTTMEQRRNQNAVQQQDDEETQHG). Positions 51–80 (TVEGVAYTPRKDLLQIKGISDAKVDKIVEA) constitute a HhH domain. Residues 100–314 (QEIIQITSGS…LRKGRAEERI (215 aa)) enclose the FtsK domain. Residue 130-137 (GEFRSGKT) participates in ATP binding.

Belongs to the RecA family. RAD51 subfamily. In terms of assembly, self-associates and interacts with XRCC3. Binds to RAD54/CHR25. Interacts with BRCA2A and BRCA2B. Can form a tripartite complex with both BRCA2B and DSS1(I). As to expression, detected in various tissues. Higher expression in reproductive tissues than in vegetative tissues, with the highest expression level in young flower buds. At cellular level, is expressed at low levels in flower primordia, then at higher levels in young anthers and at highest levels in both females and males meiocytes. Not detected in gametophytes.

The protein resides in the nucleus. Its function is as follows. Binds to single and double-stranded DNA and exhibits DNA-dependent ATPase activity. Unwinds duplex DNA. Component of the meiotic recombination pathway. Seems to play a role in mediating chromosome homology search, chromosome pairing and synapsis at early stages and probably chromosome crossing-over at later stages in meiosis. Probably is involved in the repair of meiotic double strand breaks (DBSs) generated by AtSPO11-1 and in homologous recombination. Its function is dispensable for vegetative growth and root mitosis. The polypeptide is DNA repair protein RAD51 homolog 1 (Arabidopsis thaliana (Mouse-ear cress)).